We begin with the raw amino-acid sequence, 102 residues long: Putative defensin-like protein 152 (102 aa).

The signal sequence occupies residues 1–29 (MKKASQLSTTILTIFIVLAIGMMVKGTVG). 4 disulfides stabilise this stretch: cysteine 34/cysteine 93, cysteine 51/cysteine 71, cysteine 56/cysteine 87, and cysteine 60/cysteine 89.

Belongs to the DEFL family.

Its subcellular location is the secreted. This chain is Putative defensin-like protein 152 (LCR11), found in Arabidopsis thaliana (Mouse-ear cress).